The sequence spans 319 residues: NADH-quinone oxidoreductase subunit H 1 (319 aa).

Transmembrane regions (helical) follow at residues 1-21 (MIGLIITAIISAVLIMALLVV), 77-97 (ILAPAIAATPVLAGFGVVAFG), 107-127 (VGVLFLLGMMGLTAYAAMLGA), 147-167 (LAYEVFLGLSLMGAVMLAGSL), 179-199 (VWFVVLQPLGAALFCIAGVAA), 214-234 (LVAGFITEYTGMSFGLFFLGE), 238-258 (VLLVSALAVTLFFGGWLGPWL), 262-282 (IWFGLKTAVIAVVFVWLRATL), and 293-313 (FAWKIALPLSLLNLLLTGIVV).

The protein belongs to the complex I subunit 1 family. As to quaternary structure, NDH-1 is composed of 14 different subunits. Subunits NuoA, H, J, K, L, M, N constitute the membrane sector of the complex.

It is found in the cell inner membrane. The enzyme catalyses a quinone + NADH + 5 H(+)(in) = a quinol + NAD(+) + 4 H(+)(out). NDH-1 shuttles electrons from NADH, via FMN and iron-sulfur (Fe-S) centers, to quinones in the respiratory chain. The immediate electron acceptor for the enzyme in this species is believed to be ubiquinone. Couples the redox reaction to proton translocation (for every two electrons transferred, four hydrogen ions are translocated across the cytoplasmic membrane), and thus conserves the redox energy in a proton gradient. This subunit may bind ubiquinone. The sequence is that of NADH-quinone oxidoreductase subunit H 1 from Rhodopseudomonas palustris (strain HaA2).